Consider the following 318-residue polypeptide: uncharacterized protein (318 aa).

The helical transmembrane segment at 2 to 22 (ILELIIVLVLLVLAFKSLKIL) threads the bilayer. A disordered region spans residues 295-318 (SDPEDKGVSEVETESQPAEKPEKH).

Belongs to the band 7/mec-2 family.

It is found in the membrane. This is an uncharacterized protein from Methanothermobacter thermautotrophicus (strain ATCC 29096 / DSM 1053 / JCM 10044 / NBRC 100330 / Delta H) (Methanobacterium thermoautotrophicum).